The sequence spans 603 residues: NAD 5'-nucleotidase (603 aa).

The N-terminal stretch at 1–25 (MLLSKKSASFALSAFAMLFTSVALA) is a signal peptide. Residues Asp-44, His-46, Asp-94, Asn-126, and His-227 each contribute to the Zn(2+) site. Residues Arg-397, Arg-437, Phe-456, and 540–546 (YVAGGKD) each bind substrate.

This sequence belongs to the 5'-nucleotidase family. Zn(2+) serves as cofactor.

Its subcellular location is the periplasm. The enzyme catalyses a ribonucleoside 5'-phosphate + H2O = a ribonucleoside + phosphate. Degrades NAD into adenosine and nicotinamide riboside, the latter being subsequently internalized by a specific permease. Also endowed with NAD(P) pyrophosphatase activity. Exhibits a broad substrate specificity, recognizing either mono- or dinucleotide nicotinamides and different adenosine phosphates with a maximal activity on 5'-adenosine monophosphate. This chain is NAD 5'-nucleotidase, found in Haemophilus influenzae (strain ATCC 51907 / DSM 11121 / KW20 / Rd).